We begin with the raw amino-acid sequence, 155 residues long: S-ribosylhomocysteine lyase (155 aa).

3 residues coordinate Fe cation: His54, His58, and Cys122.

It belongs to the LuxS family. In terms of assembly, homodimer. The cofactor is Fe cation.

The enzyme catalyses S-(5-deoxy-D-ribos-5-yl)-L-homocysteine = (S)-4,5-dihydroxypentane-2,3-dione + L-homocysteine. Functionally, involved in the synthesis of autoinducer 2 (AI-2) which is secreted by bacteria and is used to communicate both the cell density and the metabolic potential of the environment. The regulation of gene expression in response to changes in cell density is called quorum sensing. Catalyzes the transformation of S-ribosylhomocysteine (RHC) to homocysteine (HC) and 4,5-dihydroxy-2,3-pentadione (DPD). The protein is S-ribosylhomocysteine lyase of Deinococcus geothermalis (strain DSM 11300 / CIP 105573 / AG-3a).